Consider the following 339-residue polypeptide: Phenylalanine--tRNA ligase alpha subunit (339 aa).

Glutamate 253 contributes to the Mg(2+) binding site.

This sequence belongs to the class-II aminoacyl-tRNA synthetase family. Phe-tRNA synthetase alpha subunit type 1 subfamily. As to quaternary structure, tetramer of two alpha and two beta subunits. Requires Mg(2+) as cofactor.

It is found in the cytoplasm. It catalyses the reaction tRNA(Phe) + L-phenylalanine + ATP = L-phenylalanyl-tRNA(Phe) + AMP + diphosphate + H(+). In Chromohalobacter salexigens (strain ATCC BAA-138 / DSM 3043 / CIP 106854 / NCIMB 13768 / 1H11), this protein is Phenylalanine--tRNA ligase alpha subunit.